A 237-amino-acid chain; its full sequence is Corrinoid adenosyltransferase MMAB (237 aa).

The N-terminal 26 residues, methionine 1–phenylalanine 26, are a transit peptide targeting the mitochondrion. The disordered stretch occupies residues glycine 30 to isoleucine 49. ATP-binding positions include threonine 54–glycine 57, serine 62–serine 63, and lysine 72. Phosphoserine is present on serine 128. Residue arginine 184–arginine 188 participates in ATP binding. Position 205 is an N6-succinyllysine (lysine 205). Asparagine 208 is a binding site for ATP. Lysine 224 is subject to N6-acetyllysine; alternate. Lysine 224 carries the N6-succinyllysine; alternate modification.

Belongs to the Cob(I)alamin adenosyltransferase family. As to quaternary structure, homotrimer.

It localises to the mitochondrion. The catalysed reaction is cob(I)alamin-[corrinoid adenosyltransferase] + ATP = apo-[corrinoid adenosyltransferase] + adenosylcob(III)alamin + triphosphate. Converts cob(I)alamin to adenosylcobalamin (adenosylcob(III)alamin), a coenzyme for methylmalonyl-CoA mutase, therefore participates in the final step of the vitamin B12 conversion. Generates adenosylcobalamin (AdoCbl) and directly delivers the cofactor to MUT in a transfer that is stimulated by ATP-binding to MMAB and gated by MMAA. The polypeptide is Corrinoid adenosyltransferase MMAB (Mus musculus (Mouse)).